A 588-amino-acid polypeptide reads, in one-letter code: Aspartate--tRNA ligase (588 aa).

Residue glutamate 177 coordinates L-aspartate. Residues glutamine 201–lysine 204 are aspartate. An L-aspartate-binding site is contributed by arginine 223. Residues arginine 223–glutamate 225 and glutamine 232 each bind ATP. Histidine 451 contributes to the L-aspartate binding site. Glutamate 485 serves as a coordination point for ATP. Residue arginine 492 coordinates L-aspartate. Glycine 537 to arginine 540 is a binding site for ATP.

The protein belongs to the class-II aminoacyl-tRNA synthetase family. Type 1 subfamily. As to quaternary structure, homodimer.

It is found in the cytoplasm. It catalyses the reaction tRNA(Asp) + L-aspartate + ATP = L-aspartyl-tRNA(Asp) + AMP + diphosphate. In terms of biological role, catalyzes the attachment of L-aspartate to tRNA(Asp) in a two-step reaction: L-aspartate is first activated by ATP to form Asp-AMP and then transferred to the acceptor end of tRNA(Asp). The sequence is that of Aspartate--tRNA ligase from Staphylococcus carnosus (strain TM300).